A 425-amino-acid chain; its full sequence is MVVSGVLTAPAVLTAPHSGTSNTTFVVFENSHVNITAPLPFQHPSAGPLLRYSLETMTSPGFSSLAVNSTAVTPAPAVFKSLNLAVQIILSAIMIFILFVSFLGNLVVCLMVYQKAAMRSAINILLASLAFADMLLAVLNMPFALVTILTTRWIFGKFFCRLSAMFFWLFVIEGVAILLIISIDRFLIIVQRQDKLNPYRAKVLIAVSWATAFSVAFPLAVGNPDLQIPSRAPQCVFGYTTNSGYQAYVILISLISFFIPFLVILYSFMGILNTLRHNALRIHSYPEGICLSQASKLGLMSLQRPFQMSIDMGFKTRAFTTILILFAVFIVCWAPFTTYSLVATFSKHFYYQHNFFEISTWLLWLCYLKSALNPLIYYWRIKKFHDACLDMMPKSFKFLPRLPGHTRRRIRPSAVYVCGEHRTVL.

Residues 1-87 (MVVSGVLTAP…VFKSLNLAVQ (87 aa)) lie on the Extracellular side of the membrane. N-linked (GlcNAc...) asparagine glycosylation is found at Asn-22, Asn-34, and Asn-68. A helical transmembrane segment spans residues 88–112 (IILSAIMIFILFVSFLGNLVVCLMV). The Cytoplasmic portion of the chain corresponds to 113–123 (YQKAAMRSAIN). The helical transmembrane segment at 124-148 (ILLASLAFADMLLAVLNMPFALVTI) threads the bilayer. Topologically, residues 149–165 (LTTRWIFGKFFCRLSAM) are extracellular. Residues 166-190 (FFWLFVIEGVAILLIISIDRFLIIV) form a helical membrane-spanning segment. Topologically, residues 191–202 (QRQDKLNPYRAK) are cytoplasmic. A helical membrane pass occupies residues 203–222 (VLIAVSWATAFSVAFPLAVG). The Extracellular portion of the chain corresponds to 223-247 (NPDLQIPSRAPQCVFGYTTNSGYQA). The chain crosses the membrane as a helical span at residues 248-272 (YVILISLISFFIPFLVILYSFMGIL). Over 273–321 (NTLRHNALRIHSYPEGICLSQASKLGLMSLQRPFQMSIDMGFKTRAFTT) the chain is Cytoplasmic. A helical transmembrane segment spans residues 322–345 (ILILFAVFIVCWAPFTTYSLVATF). Residues 346–357 (SKHFYYQHNFFE) lie on the Extracellular side of the membrane. The helical transmembrane segment at 358 to 379 (ISTWLLWLCYLKSALNPLIYYW) threads the bilayer. At 380–425 (RIKKFHDACLDMMPKSFKFLPRLPGHTRRRIRPSAVYVCGEHRTVL) the chain is on the cytoplasmic side.

This sequence belongs to the G-protein coupled receptor 1 family. As to expression, brain specific.

Its subcellular location is the cell membrane. In terms of biological role, orphan receptor. May play a role in brain function. The polypeptide is Probable G-protein coupled receptor 63 (Gpr63) (Mus musculus (Mouse)).